A 247-amino-acid polypeptide reads, in one-letter code: 3-deoxy-manno-octulosonate cytidylyltransferase (247 aa).

It belongs to the KdsB family.

It is found in the cytoplasm. It catalyses the reaction 3-deoxy-alpha-D-manno-oct-2-ulosonate + CTP = CMP-3-deoxy-beta-D-manno-octulosonate + diphosphate. It participates in nucleotide-sugar biosynthesis; CMP-3-deoxy-D-manno-octulosonate biosynthesis; CMP-3-deoxy-D-manno-octulosonate from 3-deoxy-D-manno-octulosonate and CTP: step 1/1. It functions in the pathway bacterial outer membrane biogenesis; lipopolysaccharide biosynthesis. In terms of biological role, activates KDO (a required 8-carbon sugar) for incorporation into bacterial lipopolysaccharide in Gram-negative bacteria. This Methylorubrum populi (strain ATCC BAA-705 / NCIMB 13946 / BJ001) (Methylobacterium populi) protein is 3-deoxy-manno-octulosonate cytidylyltransferase.